A 39-amino-acid polypeptide reads, in one-letter code: IFECVFSCDIKKEGKPCKPKGEKKCTGGWRCKIKLCLKI.

Disulfide bonds link Cys4–Cys17, Cys8–Cys31, and Cys25–Cys36.

Belongs to the neurotoxin 12 (Hwtx-2) family. 06 (TXP1) subfamily. As to expression, expressed by the venom gland.

It is found in the secreted. Functionally, inhibits voltage-gated calcium channels (Cav) in rat cerebellar granule cells. Has insecticidal activity to crickets (Acheta domesticus). Is not toxic to mice. In Brachypelma albiceps (Mexican golden redrump tarantula), this protein is Omega-theraphotoxin-Ba1b.